The following is a 143-amino-acid chain: MTNDKEKRLKELNRMQYEVTQNNGTEPPFQNEFWDHKEEGIYVDIISGKPLFSSLDKFDAHCGWPSFTKPLEDEEVAEKVDKSHGMVRTEVRSKTADSHLGHVFPDGPGPNGLRYCINSAALKFIPKDDLEKEGYGDLKHLFD.

Residues 5–127 (KEKRLKELNR…NSAALKFIPK (123 aa)) enclose the MsrB domain. The active-site Nucleophile is C116.

The protein belongs to the MsrB Met sulfoxide reductase family.

It catalyses the reaction L-methionyl-[protein] + [thioredoxin]-disulfide + H2O = L-methionyl-(R)-S-oxide-[protein] + [thioredoxin]-dithiol. This Bacillus pumilus (strain SAFR-032) protein is Peptide methionine sulfoxide reductase MsrB.